Reading from the N-terminus, the 598-residue chain is Transcription factor dpl-1 (598 aa).

3 disordered regions span residues 1-73, 435-457, and 573-598; these read MNPT…PTGL, NRPY…VNSG, and TEQP…DYFQ. Residues 13 to 22 show a composition bias toward polar residues; that stretch reads PAQSRPQVSL. Positions 55-64 are enriched in gly residues; the sequence is GVGGSSGAGG.

This sequence belongs to the E2F/DP family. As to quaternary structure, component of the DRM complex, at least composed of lin-9, lin-35, lin-37, lin-52, lin-53, lin-54- dpl-1 and efl-1. Interacts (via N-terminus) with efl-1. Interacts (via C-terminus) with lin-35 (via C-terminus).

It is found in the nucleus. Functionally, synthetic multivulva class B (synMuvB) protein. SynMuvB proteins are required to repress the induction of vulval development by Ras signaling and probably act by forming the multiprotein DRM complex that represses transcription. May also negatively regulate vulval development in association with other SynMuv class B proteins such as lin-15A. Can stimulate E2F-dependent transcription. Plays a role in negatively regulating the progression through the G1 phase of the cell cycle during postembryonic development, most likely by acting as a transcriptional repressor in association with the cell cycle regulatory factor efl-1 and the transcriptional repressor lin-35, but may also act as a positive regulator of cell cycle entry. Involved in the regulation of intestinal cell division during postembryonic development, most likely in complex with efl-1 and lin-35. Promotes germ cell programmed cell death, probably together with efl-1, by positively regulating the expression of the apoptosis proteins ced-3 and ced-4. In particular, positively regulates the expression of ced-4 in response to starvation. Its role in programmed cell death may be in conjunction with cell cycle regulatory factor efl-1 and the synthetic multivulva class B proteins lin-35, lin-37 and lin-52, and is independent of the ced-1, ced-8 and ced-9 pathways. The protein is Transcription factor dpl-1 of Caenorhabditis elegans.